We begin with the raw amino-acid sequence, 216 residues long: Corrinoid protein DSY3155 (216 aa).

A B12-binding N-terminal domain is found at 1–90 (MIMSLLDELK…EIAKKGMSEG (90 aa)). In terms of domain architecture, B12-binding spans 93 to 216 (KGKIVLGTVE…VELANKILGK (124 aa)). Histidine 106 contributes to the methylcob(III)alamin binding site.

It belongs to the methylamine corrinoid protein family.

Its function is as follows. Probably harbors a corrinoid prosthetic group and acts as a methyl group carrier between MtgB and MtgA. A methyl group from glycine betaine is likely first transferred to the corrinoid prosthetic group of the enzyme by MtgB, and then transferred to tetrahydrofolate (THF) by MtgA. The methyl group may then be ultimately converted to carbon dioxide, and its oxidation would also provide reducing equivalents for anaerobic respiration. Thus, may function in the pathway that allows anaerobic methylotrophic growth of D.hafniense using glycine betaine. This Desulfitobacterium hafniense (strain Y51) protein is Corrinoid protein DSY3155.